We begin with the raw amino-acid sequence, 647 residues long: Methyl-accepting chemotaxis protein McpK (647 aa).

Residues 1–16 (MYDWWVLQLAKLSVSR) are Cytoplasmic-facing. Residues 17–37 (KLMVGFGVLLALLLLVVISSN) traverse the membrane as a helical segment. The Periplasmic segment spans residues 38 to 291 (RTLTHQTALS…LRESTASRDR (254 aa)). An HBM domain is found at 45–287 (ALSEQLAEVA…AGRQLRESTA (243 aa)). The chain crosses the membrane as a helical span at residues 292–312 (ASLWLIAALALAFGCVAGWAI). Residues 313 to 647 (NRQIVRPLDE…LQAQVGRFRL (335 aa)) are Cytoplasmic-facing. The HAMP domain maps to 314–370 (RQIVRPLDEALAQAEAIAAGDLGKRPQNPLTLQRRDELGQLQRVMQRMGDSLRELVG). Positions 375-611 (GVSQLASSAE…EINRSVLSVR (237 aa)) constitute a Methyl-accepting transducer domain.

This sequence belongs to the methyl-accepting chemotaxis (MCP) protein family. Ligand free ligand-binding domain (LBD) is present in a monomer-dimer equilibrium. AlphaKG binding stabilizes the homodimer.

The protein localises to the cell inner membrane. In terms of biological role, chemotactic-signal transducers respond to changes in the concentration of attractants and repellents in the environment, transduce a signal from the outside to the inside of the cell, and facilitate sensory adaptation through the variation of the level of methylation. McpK is a chemoreceptor that specifically binds and mediates chemotaxis to alpha-ketoglutarate (alphaKG). This Pseudomonas aeruginosa (strain ATCC 15692 / DSM 22644 / CIP 104116 / JCM 14847 / LMG 12228 / 1C / PRS 101 / PAO1) protein is Methyl-accepting chemotaxis protein McpK.